Reading from the N-terminus, the 275-residue chain is tRNA uridine(34) hydroxylase (275 aa).

The Rhodanese domain occupies 122–218 (SRSDVYTIDT…YFKSTQNKNS (97 aa)). C178 (cysteine persulfide intermediate) is an active-site residue.

The protein belongs to the TrhO family.

It carries out the reaction uridine(34) in tRNA + AH2 + O2 = 5-hydroxyuridine(34) in tRNA + A + H2O. Catalyzes oxygen-dependent 5-hydroxyuridine (ho5U) modification at position 34 in tRNAs. This is tRNA uridine(34) hydroxylase from Ehrlichia chaffeensis (strain ATCC CRL-10679 / Arkansas).